A 410-amino-acid chain; its full sequence is LL-diaminopimelate aminotransferase (410 aa).

The substrate site is built by Tyr-15 and Gly-42. Pyridoxal 5'-phosphate is bound by residues Tyr-72, 108–109 (AK), Tyr-132, Asn-188, Tyr-219, and 247–249 (SFS). Positions 109, 132, and 188 each coordinate substrate. An N6-(pyridoxal phosphate)lysine modification is found at Lys-250. The pyridoxal 5'-phosphate site is built by Arg-258 and Asn-293. Residues Asn-293 and Arg-389 each contribute to the substrate site.

It belongs to the class-I pyridoxal-phosphate-dependent aminotransferase family. LL-diaminopimelate aminotransferase subfamily. In terms of assembly, homodimer. It depends on pyridoxal 5'-phosphate as a cofactor.

The catalysed reaction is (2S,6S)-2,6-diaminopimelate + 2-oxoglutarate = (S)-2,3,4,5-tetrahydrodipicolinate + L-glutamate + H2O + H(+). It participates in amino-acid biosynthesis; L-lysine biosynthesis via DAP pathway; LL-2,6-diaminopimelate from (S)-tetrahydrodipicolinate (aminotransferase route): step 1/1. Its function is as follows. Involved in the synthesis of meso-diaminopimelate (m-DAP or DL-DAP), required for both lysine and peptidoglycan biosynthesis. Catalyzes the direct conversion of tetrahydrodipicolinate to LL-diaminopimelate. Can also use m-DAP instead of LL-DAP as the amino-group donor. This is LL-diaminopimelate aminotransferase from Bacteroides fragilis (strain ATCC 25285 / DSM 2151 / CCUG 4856 / JCM 11019 / LMG 10263 / NCTC 9343 / Onslow / VPI 2553 / EN-2).